A 384-amino-acid chain; its full sequence is Opsin-3 (384 aa).

The Extracellular portion of the chain corresponds to 1 to 62 (MATNFTQELY…VSKYWHYVLA (62 aa)). N-linked (GlcNAc...) asparagine glycosylation occurs at N4. Residues 63–83 (LIYTMLMVTSLTGNGIVIWIF) traverse the membrane as a helical segment. Residues 84–94 (STSKSLRSASN) lie on the Cytoplasmic side of the membrane. A helical transmembrane segment spans residues 95 to 115 (MFVINLAVFDLMMMLEMPLLI). Over 116–132 (MNSFYQRLVGYQLGCDV) the chain is Extracellular. Cysteines 130 and 207 form a disulfide. The helical transmembrane segment at 133–153 (YAVLGSLSGIGGAITNAVIAF) threads the bilayer. Residues 154-171 (DRYKTISSPLDGRINTVQ) are Cytoplasmic-facing. Residues 172 to 192 (AGLLIAFTWFWALPFTILPAF) traverse the membrane as a helical segment. The Extracellular segment spans residues 193–219 (RIWGRFVPEGFLTTCSFDYFTEDQDTE). Residues 220 to 240 (VFVACIFVWSYCIPMALICYF) traverse the membrane as a helical segment. Topologically, residues 241–284 (YSQLFGAVRLHERMLQEQAKKMNVKSLASNKEDNSRSVEIRIAK) are cytoplasmic. Residues 285-305 (VAFTIFFLFICAWTPYAFVTM) traverse the membrane as a helical segment. Topologically, residues 306-312 (TGAFGDR) are extracellular. A helical transmembrane segment spans residues 313–333 (TLLTPIATMIPAVCCKVVSCI). At 334–384 (DPWVYAINHPRYRAELQKRLPWMGVREQDPDAVSTTTSVATAGFQPPAAEA) the chain is on the cytoplasmic side.

The protein belongs to the G-protein coupled receptor 1 family. Opsin subfamily. In the retina, expression is essentially uniformly distributed but a higher level is seen in the ventral region where the B-cells are localized.

Its subcellular location is the membrane. Its function is as follows. Visual pigments are the light-absorbing molecules that mediate vision. They consist of an apoprotein, opsin, covalently linked to cis-retinal. May play a role in photoperiodic photoreception. The polypeptide is Opsin-3 (OP3) (Manduca sexta (Tobacco hawkmoth)).